The following is a 445-amino-acid chain: MSNRKYFGTDGVRGKVGDTPITPDFVLKLGWAAGKVLARHGSRKIIIGKDTRISGYMLESALEAGLAAAGLSASFTGPMPTPAVAYLTRTFRAEAGIVISASHNPYYDNGIKFFSIDGTKLPDEVEEAIEAELEKPLTCVESAELGKASRIVDAAGRYIEFCKGTFPSELSLNGLKIVVDCANGATYHIAPSVLRELGAKVIAIGCEPDGMNINEECGATDVRQLQARVLAEKADVGLAFDGDGDRLIMVDHLGNKVDGDQILYIIAREGLRQGQLRGGAVGTLMSNMGLEVALKQLGIPFARAKVGDRYVLEMMQAKGWRIGAENSGHVILLDKTTTGDGVIAGLQVLTAIVRNHMSLHDLCSGMKLFPQILVNVRFTGENDPLEDKKVQQITQDVEKELAGRGRVLLRKSGTEPLIRVMVEGEHEETVIALANRIADAVKAAG.

Catalysis depends on serine 102, which acts as the Phosphoserine intermediate. Positions 102, 241, 243, and 245 each coordinate Mg(2+). Serine 102 bears the Phosphoserine mark.

Belongs to the phosphohexose mutase family. It depends on Mg(2+) as a cofactor. In terms of processing, activated by phosphorylation.

It catalyses the reaction alpha-D-glucosamine 1-phosphate = D-glucosamine 6-phosphate. Functionally, catalyzes the conversion of glucosamine-6-phosphate to glucosamine-1-phosphate. The chain is Phosphoglucosamine mutase from Pectobacterium carotovorum subsp. carotovorum (strain PC1).